Reading from the N-terminus, the 109-residue chain is Short-chain dehydrogenase/reductase homolog YusS (109 aa).

This sequence belongs to the short-chain dehydrogenases/reductases (SDR) family.

This chain is Short-chain dehydrogenase/reductase homolog YusS (yusS), found in Bacillus subtilis (strain 168).